The following is a 331-amino-acid chain: Isopenicillin N synthase (331 aa).

Isopenicillin N contacts are provided by Arg-87, Tyr-91, Ser-183, and Tyr-189. N-[(5S)-5-amino-5-carboxypentanoyl]-L-cysteinyl-D-valine-binding residues include Arg-87, Tyr-91, Ser-183, Tyr-189, His-214, and Asp-216. In terms of domain architecture, Fe2OG dioxygenase spans 176–288 (KKEDALSSVV…RQSLPFFVNL (113 aa)). His-214, Asp-216, and His-270 together coordinate Fe(2+). Arg-279 serves as a coordination point for 2-oxoglutarate. Position 281 (Ser-281) interacts with isopenicillin N. Ser-281 lines the N-[(5S)-5-amino-5-carboxypentanoyl]-L-cysteinyl-D-valine pocket.

The protein belongs to the iron/ascorbate-dependent oxidoreductase family. In terms of assembly, monomer. Fe(2+) is required as a cofactor.

It localises to the cytoplasm. The protein resides in the cytosol. The catalysed reaction is N-[(5S)-5-amino-5-carboxypentanoyl]-L-cysteinyl-D-valine + O2 = isopenicillin N + 2 H2O. The protein operates within antibiotic biosynthesis; penicillin G biosynthesis; penicillin G from L-alpha-aminoadipate and L-cysteine and L-valine: step 2/3. In terms of biological role, isopenicillin N synthase; part of the gene cluster that mediates the biosynthesis of penicillin, the world's most important antibiotic. IpnA catalyzes the cyclization of the tripeptide N-[(5S)-5-amino-5-carboxypentanoyl]-L-cysteinyl-D-valine (LLD-ACV or ACV) to form isopenicillin N (IPN) that contains the beta-lactam nucleus. The penicillin biosynthesis occurs via 3 enzymatic steps, the first corresponding to the production of the tripeptide N-[(5S)-5-amino-5-carboxypentanoyl]-L-cysteinyl-D-valine (LLD-ACV or ACV) by the NRPS acvA. The tripeptide ACV is then cyclized to isopenicillin N (IPN) by the isopenicillin N synthase ipnA that forms the beta-lactam nucleus. Finally, the alpha-aminoadipyl side chain is exchanged for phenylacetic acid by the isopenicillin N acyltransferase aatA to yield penicillin in the peroxisomal matrix. This is Isopenicillin N synthase from Penicillium chrysogenum (Penicillium notatum).